We begin with the raw amino-acid sequence, 421 residues long: Exoskeleton protein RP43 (421 aa).

The signal sequence occupies residues 1–24; sequence MRVIFVISLVSFMFVTWQTNPVHC. Cystine bridges form between Cys72–Cys104, Cys132–Cys154, Cys193–Cys219, Cys247–Cys269, Cys309–Cys335, and Cys362–Cys384. 3 consecutive CUB domains span residues 72-191, 193-306, and 309-421; these read CSKP…YSIV, CNSL…YSVP, and CSVV…YTTG.

In terms of tissue distribution, detected in vestimentum and trunk but not in opisthosome or obturaculum. In the vestimentum, expression is restricted to epithelial cells under apical cuticular plaques.

Its function is as follows. May play a role in protein-protein interactions during tube assembly. The chain is Exoskeleton protein RP43 from Riftia pachyptila (Vent tube worm).